Here is a 218-residue protein sequence, read N- to C-terminus: Large ribosomal subunit protein uL3 (218 aa).

It belongs to the universal ribosomal protein uL3 family. In terms of assembly, part of the 50S ribosomal subunit. Forms a cluster with proteins L14 and L19.

Functionally, one of the primary rRNA binding proteins, it binds directly near the 3'-end of the 23S rRNA, where it nucleates assembly of the 50S subunit. In Corynebacterium diphtheriae (strain ATCC 700971 / NCTC 13129 / Biotype gravis), this protein is Large ribosomal subunit protein uL3.